A 77-amino-acid polypeptide reads, in one-letter code: Large ribosomal subunit protein bL28 (77 aa).

This sequence belongs to the bacterial ribosomal protein bL28 family.

The chain is Large ribosomal subunit protein bL28 from Variovorax paradoxus (strain S110).